The chain runs to 137 residues: Endoribonuclease YbeY (137 aa).

Zn(2+) contacts are provided by His107, His111, and Asp117.

It belongs to the endoribonuclease YbeY family. Zn(2+) serves as cofactor.

The protein resides in the cytoplasm. Functionally, single strand-specific metallo-endoribonuclease involved in late-stage 70S ribosome quality control and in maturation of the 3' terminus of the 16S rRNA. This chain is Endoribonuclease YbeY, found in Bacteroides thetaiotaomicron (strain ATCC 29148 / DSM 2079 / JCM 5827 / CCUG 10774 / NCTC 10582 / VPI-5482 / E50).